The following is a 138-amino-acid chain: Putative pre-16S rRNA nuclease (138 aa).

Belongs to the YqgF nuclease family.

The protein localises to the cytoplasm. Could be a nuclease involved in processing of the 5'-end of pre-16S rRNA. The polypeptide is Putative pre-16S rRNA nuclease (Bacillus pumilus (strain SAFR-032)).